We begin with the raw amino-acid sequence, 355 residues long: Methyltransferase FUS9 (355 aa).

S-adenosyl-L-homocysteine is bound by residues Tyr-18, Asn-63, Asp-86, Ser-123, and Phe-124. Phe-231 is a Mg(2+) binding site.

It belongs to the methyltransferase superfamily. Type-7 methyltransferase family. Mg(2+) is required as a cofactor.

It participates in mycotoxin biosynthesis. Its function is as follows. Methyltransferase; part of the gene cluster that mediates the biosynthesis of the mycotoxin fusarin C. Within the cluster, FUS1, FUS2, FUS8 and FUS9 are sufficient for fusarin production. The roles of the other FUS members are yet undetermined. The fusarin C synthetase FUS1 is responsible for the condensation of one acetyl-coenzyme A (CoA) unit with six malonyl-CoA units and the amide linkage of the arising heptaketide and homoserine, subsequently releasing the first intermediate, prefusarin, as an alcohol with an open ring structure. The cytochrome P450 monooxygenase FUS8 participates in multiple oxidation processes at carbon C-20 and is able to use the FUS1 product as substrate, resulting in formation of 20-hydroxy-prefusarin. This reaction seems to be essential before the 2-pyrrolidone ring closure can be catalyzed by FUS2, generating 20-hydroxy-fusarin. FUS8 is able to further oxidizes carbon C-20 after ring closure, resulting in the formation of carboxy-fusarin C. As the last step, FUS9 methylates the hydroxyl group at C-21 to generate fusarin C. Fusarin C can then rearrange to epi-fusarin C, the (z)-isomers, and fusarin A and fusarin D. This Gibberella fujikuroi (strain CBS 195.34 / IMI 58289 / NRRL A-6831) (Bakanae and foot rot disease fungus) protein is Methyltransferase FUS9.